The following is a 268-amino-acid chain: Tetratricopeptide repeat protein 33 (268 aa).

The disordered stretch occupies residues 14–34 (VSKQTVQQFEQDSEQADEDEV). A compositionally biased stretch (acidic residues) spans 24 to 34 (QDSEQADEDEV). TPR repeat units follow at residues 60–93 (SKRL…TPED), 94–127 (AVLY…RPIW), and 128–161 (WEAW…HPSE). Residues 249 to 268 (EGDDNPTSSSQSVLIKARGL) are disordered.

The protein is Tetratricopeptide repeat protein 33 (ttc33) of Danio rerio (Zebrafish).